We begin with the raw amino-acid sequence, 139 residues long: Cofilin (139 aa).

Positions 4–135 (GVKVSQECLD…SYDTVLDKVS (132 aa)) constitute an ADF-H domain.

Belongs to the actin-binding proteins ADF family.

It is found in the cytoplasm. It localises to the cytoskeleton. The protein localises to the nucleus matrix. Controls reversibly actin polymerization and depolymerization in a pH-sensitive manner. It has the ability to bind G- and F-actin in a 1:1 ratio of cofilin to actin. Binding to F-actin is regulated by tropomyosin. It is the major component of intranuclear and cytoplasmic actin rods. Required for accumulation of actin at the cell division site via depolymerizing actin at the cell ends. In association with myosin II has a role in the assembly of the contractile ring via severing actin filaments. Involved in the maintenance of the contractile ring once formed. In association with profilin and capping protein, has a role in the mitotic reorganization of the actin cytoskeleton. In Mycosarcoma maydis (Corn smut fungus), this protein is Cofilin (COF1).